The sequence spans 969 residues: Translation initiation factor IF-2 (969 aa).

The tract at residues 50 to 370 is disordered; it reads SFASKSAPAN…QAPSVGGVRL (321 aa). Positions 54 to 76 are enriched in low complexity; that stretch reads KSAPANGAKPGPAASARPGAKPT. Over residues 77–87 the composition is skewed to pro residues; sequence PGGPRPGPRTP. The segment covering 88–102 has biased composition (low complexity); that stretch reads APAASAPQAPAEQTA. Over residues 112–124 the composition is skewed to pro residues; sequence AVKPGPAPTPARP. Residues 125–164 are compositionally biased toward low complexity; the sequence is AAPEAPAAKAAPEAPAQRPTPGGPRPGQQQQRPGAPAQGG. The span at 240 to 267 shows a compositional bias: pro residues; it reads PGGPRPSPGSMPPRPNPGAMPQRTPRPG. Over residues 269–340 the composition is skewed to gly residues; sequence SAGGRPGRPG…GAAGAFGRPG (72 aa). The span at 344–353 shows a compositional bias: basic residues; it reads RRGRKSKRQK. Residues 465-636 enclose the tr-type G domain; sequence VRPPVVTVMG…AVLLTADAAL (172 aa). Residues 474 to 481 are G1; it reads GHVDHGKT. GTP is bound at residue 474–481; that stretch reads GHVDHGKT. Residues 499-503 are G2; it reads GITQH. Residues 524-527 form a G3 region; that stretch reads DTPG. Residues 524–528 and 578–581 each bind GTP; these read DTPGH and NKID. Positions 578-581 are G4; it reads NKID. The interval 614-616 is G5; sequence SAK.

Belongs to the TRAFAC class translation factor GTPase superfamily. Classic translation factor GTPase family. IF-2 subfamily.

The protein localises to the cytoplasm. Its function is as follows. One of the essential components for the initiation of protein synthesis. Protects formylmethionyl-tRNA from spontaneous hydrolysis and promotes its binding to the 30S ribosomal subunits. Also involved in the hydrolysis of GTP during the formation of the 70S ribosomal complex. This Nocardia farcinica (strain IFM 10152) protein is Translation initiation factor IF-2.